Consider the following 501-residue polypeptide: Cytochrome P450 2J6 (501 aa).

Cys-447 contributes to the heme binding site.

It belongs to the cytochrome P450 family. It depends on heme as a cofactor.

Its subcellular location is the endoplasmic reticulum membrane. The protein localises to the microsome membrane. The catalysed reaction is an organic molecule + reduced [NADPH--hemoprotein reductase] + O2 = an alcohol + oxidized [NADPH--hemoprotein reductase] + H2O + H(+). The protein is Cytochrome P450 2J6 (Cyp2j6) of Mus musculus (Mouse).